Consider the following 504-residue polypeptide: ATP synthase subunit alpha (504 aa).

170–177 (GDRQTGKT) is an ATP binding site.

This sequence belongs to the ATPase alpha/beta chains family. F-type ATPases have 2 components, CF(1) - the catalytic core - and CF(0) - the membrane proton channel. CF(1) has five subunits: alpha(3), beta(3), gamma(1), delta(1), epsilon(1). CF(0) has four main subunits: a(1), b(1), b'(1) and c(9-12).

The protein resides in the cellular thylakoid membrane. The catalysed reaction is ATP + H2O + 4 H(+)(in) = ADP + phosphate + 5 H(+)(out). In terms of biological role, produces ATP from ADP in the presence of a proton gradient across the membrane. The alpha chain is a regulatory subunit. This is ATP synthase subunit alpha from Prochlorococcus marinus (strain NATL2A).